The chain runs to 20 residues: GKPSRPRPAPIQPRPPHPRL.

A disordered region spans residues 1-20 (GKPSRPRPAPIQPRPPHPRL).

It belongs to the apidaecin family.

It is found in the secreted. In terms of biological role, antimicrobial peptide active against many Gram-negative enterobacterial and plant-associated bacterial species. Not active against other bacterial species like H.pylori, P.mirabilis, B.pertussis or N.gonorrhoeae. Functionally, among others, also active against S.typhi. Not active against S.typhi. This is Apidaecin 3+ from Pimpla disparis (Parasitic wasp).